We begin with the raw amino-acid sequence, 593 residues long: Probable serine/threonine-protein kinase samkB (593 aa).

The SAM domain maps to 29–93; it reads WNNEAVCEWL…SIFKKLKNNN (65 aa). Residues 108 to 157 form a disordered region; sequence ESNSINNSNNNNNNNNNNNNNNNNNNNNNNNNNNNNNNNNNNNNNNKIDT. Residues 113–153 are compositionally biased toward low complexity; that stretch reads NNSNNNNNNNNNNNNNNNNNNNNNNNNNNNNNNNNNNNNNN. The Protein kinase domain occupies 186 to 438; the sequence is YKLIEEIGRG…SKQLLEAQWF (253 aa). Residues 192–200 and Lys-216 each bind ATP; that span reads IGRGAFSIV. Asp-313 serves as the catalytic Proton acceptor.

Belongs to the protein kinase superfamily. Ser/Thr protein kinase family.

It catalyses the reaction L-seryl-[protein] + ATP = O-phospho-L-seryl-[protein] + ADP + H(+). The catalysed reaction is L-threonyl-[protein] + ATP = O-phospho-L-threonyl-[protein] + ADP + H(+). This is Probable serine/threonine-protein kinase samkB (samkB) from Dictyostelium discoideum (Social amoeba).